The chain runs to 347 residues: DNA polymerase III subunit delta (347 aa).

This sequence belongs to the DNA polymerase HolA subunit family. Component of the DNA clamp loading complex consisting of tau(3):delta(1):delta'(1). The DNA polymerase III holoenzyme complex contains at least 10 different subunits organized into 3 functionally essential subassemblies: the Pol III core, the beta sliding clamp processivity factor and the clamp-loading complex. The Pol III core (subunits alpha, epsilon and theta) contains the polymerase and the 3'-5' exonuclease proofreading activities. The polymerase is tethered to the template via the dimeric beta sliding clamp processivity factor. The DNA clamp-loading complex assembles the beta sliding clamp onto the primed template and plays a central role in the organization and communication at the replication fork.

It localises to the cytoplasm. It is found in the nucleoid. It carries out the reaction DNA(n) + a 2'-deoxyribonucleoside 5'-triphosphate = DNA(n+1) + diphosphate. In terms of biological role, part of the beta sliding clamp loading complex, which hydrolyzes ATP to load the beta clamp onto primed DNA to form the DNA replication pre-initiation complex. DNA polymerase III is a complex, multichain enzyme responsible for most of the replicative synthesis in bacteria. This DNA polymerase also exhibits 3'-5' exonuclease activity. The delta subunit is the wrench that will open the beta subunit dimer. The DNA clamp loading complex (tau(3),delta,delta') is thought to load beta dimers onto DNA by binding ATP which alters the complex's conformation so it can bind beta sliding clamp dimers and open them at one interface. Primed DNA is recognized, ATP is hydrolyzed releasing the clamp loading complex and closing the beta sliding clamp ring around the primed DNA. This chain is DNA polymerase III subunit delta, found in Bacillus subtilis (strain 168).